Reading from the N-terminus, the 254-residue chain is Imidazole glycerol phosphate synthase subunit HisF (254 aa).

Catalysis depends on residues D11 and D130.

Belongs to the HisA/HisF family. As to quaternary structure, heterodimer of HisH and HisF.

The protein resides in the cytoplasm. The catalysed reaction is 5-[(5-phospho-1-deoxy-D-ribulos-1-ylimino)methylamino]-1-(5-phospho-beta-D-ribosyl)imidazole-4-carboxamide + L-glutamine = D-erythro-1-(imidazol-4-yl)glycerol 3-phosphate + 5-amino-1-(5-phospho-beta-D-ribosyl)imidazole-4-carboxamide + L-glutamate + H(+). The protein operates within amino-acid biosynthesis; L-histidine biosynthesis; L-histidine from 5-phospho-alpha-D-ribose 1-diphosphate: step 5/9. In terms of biological role, IGPS catalyzes the conversion of PRFAR and glutamine to IGP, AICAR and glutamate. The HisF subunit catalyzes the cyclization activity that produces IGP and AICAR from PRFAR using the ammonia provided by the HisH subunit. The chain is Imidazole glycerol phosphate synthase subunit HisF from Microcystis aeruginosa (strain NIES-843 / IAM M-2473).